Here is a 253-residue protein sequence, read N- to C-terminus: Redox-sensing transcriptional repressor Rex (253 aa).

A DNA-binding region (H-T-H motif) is located at residues 26–65; sequence LYLRALTALSERSVPTVSSEELATAAGVNSAKLRKDFSYL. Residue 100–105 coordinates NAD(+); that stretch reads GIGNLG. Residues 217-253 are disordered; sequence RKAGEDSAAEDEGAPPMRATPASRKGPDGDMPAVMPA.

The protein belongs to the transcriptional regulatory Rex family. In terms of assembly, homodimer.

The protein localises to the cytoplasm. Its function is as follows. Modulates transcription in response to changes in cellular NADH/NAD(+) redox state. This Streptomyces griseus subsp. griseus (strain JCM 4626 / CBS 651.72 / NBRC 13350 / KCC S-0626 / ISP 5235) protein is Redox-sensing transcriptional repressor Rex.